The sequence spans 296 residues: Sulfotransferase 6B1 (296 aa).

His-112 serves as the catalytic Proton acceptor. 3'-phosphoadenylyl sulfate-binding positions include Arg-134, Ser-142, Tyr-197, and 253–255; that span reads RKG.

This sequence belongs to the sulfotransferase 1 family.

The protein localises to the cytoplasm. It is found in the cytosol. The catalysed reaction is thyroxine + 3'-phosphoadenylyl sulfate = thyroxine sulfate + adenosine 3',5'-bisphosphate + H(+). Its activity is regulated as follows. Strongly inhibited by the divalent metal cations Fe(2+), Hg(2+), Co(2+), Zn(2+), Cu(2+) and Cd(2+). Sulfotransferase that utilizes 3'-phospho-5'-adenylyl sulfate (PAPS) as sulfonate donor to catalyze the sulfate conjugation of a variety of xenobiotic and endogenous compounds, including dopamine, T3 (triiodo-L-thyronine), T4 (thyroxine), flavonoids, isoflavonoids, and other phenolic compounds. The polypeptide is Sulfotransferase 6B1 (Danio rerio (Zebrafish)).